A 576-amino-acid chain; its full sequence is Glucoamylase ARB_02327-1 (576 aa).

The N-terminal stretch at 1–20 is a signal peptide; the sequence is MGLASTVSLALLGLCSLARA. Tryptophan 141 contributes to the substrate binding site. Residues asparagine 168 and asparagine 192 are each glycosylated (N-linked (GlcNAc...) asparagine). Residue aspartate 197 is the Proton acceptor of the active site. The active-site Proton donor is the glutamate 200. 2 disulfides stabilise this stretch: cysteine 243/cysteine 470 and cysteine 285/cysteine 293. The CBM20 domain maps to 477–576; it reads GSGGDTVAVT…GSFTQNDTWR (100 aa). Residues 552 to 576 are disordered; that stretch reads TWESDPNRSITTSASGSFTQNDTWR. 2 N-linked (GlcNAc...) asparagine glycosylation sites follow: asparagine 558 and asparagine 572.

The protein belongs to the glycosyl hydrolase 15 family.

The protein localises to the secreted. The catalysed reaction is Hydrolysis of terminal (1-&gt;4)-linked alpha-D-glucose residues successively from non-reducing ends of the chains with release of beta-D-glucose.. This chain is Glucoamylase ARB_02327-1, found in Schizophyllum commune (strain H4-8 / FGSC 9210) (Split gill fungus).